The sequence spans 91 residues: Acylphosphatase (91 aa).

In terms of domain architecture, Acylphosphatase-like spans 6–91 (CMRCYISGRV…WEDYISFDVL (86 aa)). Active-site residues include Arg-21 and Asn-39.

It belongs to the acylphosphatase family.

The enzyme catalyses an acyl phosphate + H2O = a carboxylate + phosphate + H(+). This is Acylphosphatase (acyP) from Legionella pneumophila subsp. pneumophila (strain Philadelphia 1 / ATCC 33152 / DSM 7513).